A 485-amino-acid polypeptide reads, in one-letter code: Terminase, large subunit (485 aa).

ADP contacts are provided by residues lysine 17 to glutamine 22, glutamine 40 to glutamate 45, and arginine 79. The tract at residues glutamine 22–glycine 197 is ATPase activity. The ATP site is built by glutamine 97 and glutamine 99. Residues serine 125–serine 131 carry the Walker A motif motif. The Walker B motif signature appears at phenylalanine 145–glutamate 150. The For ATPase activity role is filled by glutamate 150. Positions serine 256–tyrosine 438 are nuclease. Mg(2+) contacts are provided by aspartate 294, aspartate 347, and aspartate 429.

Belongs to the Tequatrovirus large terminase family. In terms of assembly, interacts with the terminase small subunit; the active complex is composed of a pentamer of terminase large subunits and a dodecamer of terminase small subunits. Interacts with the portal protein. The cofactor is Mg(2+).

In terms of biological role, the terminase large subunit acts as an ATP driven molecular motor necessary for viral DNA translocation into empty capsids and as an endonuclease that cuts the viral genome to initiate and to end a packaging reaction The terminase lies at a unique vertex of the procapsid and is composed of two subunits, a small terminase subunit involved in viral DNA recognition (packaging sequence), and a large terminase subunit possessing endonucleolytic and ATPase activities. Both terminase subunits heterooligomerize and are docked on the portal protein to form the packaging machine. The terminase large subunit exhibits endonuclease activity and cleaves the viral genome concatemer. Once the capsid is packaged with the DNA, the terminase complex is substituted by the tail. The protein is Terminase, large subunit of Thermus thermophilus (Thermus thermophilus phage P23-45).